The chain runs to 350 residues: Phosphoribosylformylglycinamidine cyclo-ligase (350 aa).

The protein belongs to the AIR synthase family.

It is found in the cytoplasm. It carries out the reaction 2-formamido-N(1)-(5-O-phospho-beta-D-ribosyl)acetamidine + ATP = 5-amino-1-(5-phospho-beta-D-ribosyl)imidazole + ADP + phosphate + H(+). The protein operates within purine metabolism; IMP biosynthesis via de novo pathway; 5-amino-1-(5-phospho-D-ribosyl)imidazole from N(2)-formyl-N(1)-(5-phospho-D-ribosyl)glycinamide: step 2/2. This is Phosphoribosylformylglycinamidine cyclo-ligase from Cupriavidus metallidurans (strain ATCC 43123 / DSM 2839 / NBRC 102507 / CH34) (Ralstonia metallidurans).